We begin with the raw amino-acid sequence, 249 residues long: Aspartate/glutamate leucyltransferase (249 aa).

The protein belongs to the R-transferase family. Bpt subfamily.

The protein localises to the cytoplasm. The enzyme catalyses N-terminal L-glutamyl-[protein] + L-leucyl-tRNA(Leu) = N-terminal L-leucyl-L-glutamyl-[protein] + tRNA(Leu) + H(+). It catalyses the reaction N-terminal L-aspartyl-[protein] + L-leucyl-tRNA(Leu) = N-terminal L-leucyl-L-aspartyl-[protein] + tRNA(Leu) + H(+). Functions in the N-end rule pathway of protein degradation where it conjugates Leu from its aminoacyl-tRNA to the N-termini of proteins containing an N-terminal aspartate or glutamate. The sequence is that of Aspartate/glutamate leucyltransferase from Brucella melitensis biotype 2 (strain ATCC 23457).